Reading from the N-terminus, the 439-residue chain is 26S proteasome regulatory subunit 4 homolog (439 aa).

A disordered region spans residues 1–46; sequence MGNNQSQGQGDKGEKKDQPKYQPPPPPTQFGKKKKRRGAETSTKLP. 225 to 232 contributes to the ATP binding site; the sequence is GEPGTGKT.

Belongs to the AAA ATPase family.

It localises to the cytoplasm. The protein resides in the nucleus. In terms of biological role, the 26S proteasome is involved in the ATP-dependent degradation of ubiquitinated proteins. The regulatory (or ATPase) complex confers ATP dependency and substrate specificity to the 26S complex. Plays an important role in regulating both growth and multicellular development. This chain is 26S proteasome regulatory subunit 4 homolog (psmC1), found in Dictyostelium discoideum (Social amoeba).